The following is a 752-amino-acid chain: Complement C2 (752 aa).

The signal sequence occupies residues methionine 1–serine 20. Sushi domains lie at proline 22–proline 86, valine 87–asparagine 146, and glycine 149–glutamine 206. 6 cysteine pairs are disulfide-bonded: cysteine 24-cysteine 64, cysteine 51-cysteine 84, cysteine 89-cysteine 131, cysteine 117-cysteine 144, cysteine 151-cysteine 191, and cysteine 177-cysteine 204. Asparagine 29 carries an N-linked (GlcNAc...) asparagine glycan. Asparagine 112 carries N-linked (GlcNAc...) asparagine glycosylation. The VWFA domain occupies asparagine 254–methionine 452. The MIDAS-like motif signature appears at aspartate 260–serine 264. 2 residues coordinate Mg(2+): serine 262 and serine 264. Residues asparagine 290 and asparagine 333 are each glycosylated (N-linked (GlcNAc...) asparagine). Threonine 337 lines the Mg(2+) pocket. Intrachain disulfides connect cysteine 463–cysteine 581, cysteine 492–cysteine 508, and cysteine 584–cysteine 600. One can recognise a Peptidase S1 domain in the interval glycine 464 to glycine 744. Asparagine 467 and asparagine 471 each carry an N-linked (GlcNAc...) asparagine glycan. Residues histidine 507 and aspartate 561 each act as charge relay system in the active site. 2 N-linked (GlcNAc...) asparagine glycosylation sites follow: asparagine 621 and asparagine 651. Disulfide bonds link cysteine 638-cysteine 665 and cysteine 675-cysteine 705. Catalysis depends on serine 679, which acts as the Charge relay system.

Belongs to the peptidase S1 family. As to quaternary structure, serine protease component of the C3 convertase, also named C4bC2b, composed of the serine protease complement C2b and complement C4b. Serine protease component of the C5 convertase, also named C4bC2bC3b, composed of the serine protease complement C2b, complement C3b, as well as complement C4b. It depends on Mg(2+) as a cofactor. The cofactor is Mn(2+). Post-translationally, cleaved and activated by different proteases depending on the complement pathway to generate complement C2a and serine protease complement C2b chains. Cleaved and activated by C1S following activation by the classical complement system. Cleaved and activated by MASP2 following activation by the lectin complement system. Cleaved and activated by GZMK following activation by the GZMK complement system.

The protein resides in the secreted. It localises to the cell surface. It carries out the reaction Selective cleavage of Arg-|-Ser bond in complement component C3 alpha-chain to form C3a and C3b, and Arg-|-Xaa bond in complement component C5 alpha-chain to form C5a and C5b.. In terms of biological role, precursor of the catalytic component of the C3 and C5 convertase complexes, which are part of the complement pathway, a cascade of proteins that leads to phagocytosis and breakdown of pathogens and signaling that strengthens the adaptive immune system. Component C2 is part of the classical, lectin and GZMK complement systems. Catalytic component of the complement C3 and C5 convertase complexes. Following complement activation, recruited to the surface of pathogens by complement C4b opsonin to form the C3 convertase, or C3b and C4b opsonins to form the C5 convertase. As part of the C3 convertase, cleaves and activate C3 into C3a anaphylatoxin and C3b opsonin, the next components of the complement pathways. As part of the C5 convertase, cleaves and activate C5 into C5a anaphylatoxin and C5b component of the membrane attack complex. This is Complement C2 from Gorilla gorilla gorilla (Western lowland gorilla).